Here is a 773-residue protein sequence, read N- to C-terminus: Mitogen-activated protein kinase kinase kinase 9 (773 aa).

A compositionally biased stretch (basic and acidic residues) spans 1 to 14 (MKKSSDKSPVRQHD). A disordered region spans residues 1-35 (MKKSSDKSPVRQHDTATQINSDAVSSSTSFTDSDS). Low complexity predominate over residues 21-35 (SDAVSSSTSFTDSDS). Residues serine 79 and serine 150 each carry the phosphoserine modification. The interval 100 to 493 (FDKILALMKK…VSNTSPICVS (394 aa)) is regulatory region. Position 365 is a phosphoserine; by MAPK4 (serine 365). A disordered region spans residues 426 to 455 (EIVRRPSSSSSSENGCDEEEAEDDKVEKEE). Over residues 440–449 (GCDEEEAEDD) the composition is skewed to acidic residues. A Protein kinase domain is found at 501–755 (WQKGQLLRQG…ATELLNHPFV (255 aa)). ATP is bound by residues 507–515 (LRQGSFGSV) and lysine 529. Residue aspartate 624 is the Proton acceptor of the active site. Residue serine 768 is modified to Phosphoserine.

Belongs to the protein kinase superfamily. STE Ser/Thr protein kinase family. MAP kinase kinase kinase subfamily. In terms of assembly, interacts with MPK4. Phosphorylated by MPK4 upon treatment with flg22. In terms of tissue distribution, expressed at least in rosette leaves (at protein level).

The enzyme catalyses L-seryl-[protein] + ATP = O-phospho-L-seryl-[protein] + ADP + H(+). It catalyses the reaction L-threonyl-[protein] + ATP = O-phospho-L-threonyl-[protein] + ADP + H(+). Functionally, triggers SUMM2-mediated immune responses, including cell death and defense responses. Probably inhibited by the MEKK1-MKK1/ MKK2-MPK4 kinase cascade to adjust plant defense. Seems to contribute in transducing external glutamate (L-Glu) signal that elicits large-scale changes in root architecture. This chain is Mitogen-activated protein kinase kinase kinase 9, found in Arabidopsis thaliana (Mouse-ear cress).